The chain runs to 262 residues: Caffeyl-CoA reductase-Etf complex subunit CarD (262 aa).

The protein belongs to the ETF beta-subunit/FixA family. As to quaternary structure, part of the homotrimeric caffeyl-CoA reductase-Etf complex composed of (R)-2-hydroxyisocaproyl-CoA dehydratase CarC, and the electron transfer flavoprotein (ETF) alpha (CarE) and beta (CarD) subunits. It depends on FAD as a cofactor. Requires AMP as cofactor.

The protein localises to the cytoplasm. The catalysed reaction is hydrocaffeoyl-CoA + 2 reduced [2Fe-2S]-[ferredoxin] + 2 NAD(+) = (E)-caffeoyl-CoA + 2 oxidized [2Fe-2S]-[ferredoxin] + 2 NADH. In terms of biological role, caffeyl-CoA reductase-Etf complex catalyzes the reduction of caffeyl-CoA to yield hydrocaffeyl-CoA. It couples the endergonic ferredoxin reduction with NADH as reductant to the exergonic reduction of caffeoyl-CoA with the same reductant. It uses the mechanism of electron bifurcation to overcome the steep energy barrier in ferredoxin reduction. The electron transfer flavoprotein (Etf) mediates the electron transfer between the different donors and acceptors. The complex can also reduce 4-coumaroyl-CoA and feruloyl-CoA. The chain is Caffeyl-CoA reductase-Etf complex subunit CarD from Acetobacterium woodii (strain ATCC 29683 / DSM 1030 / JCM 2381 / KCTC 1655 / WB1).